A 77-amino-acid chain; its full sequence is MKLTCVLIVAVLFLTACQLIAADDSRDLKRFSRRKMRDGMLNTKNTEEGCLPPLSLCTMADDECCHDCILFLCLVSP.

Residues 1-22 form the signal peptide; it reads MKLTCVLIVAVLFLTACQLIAA. Positions 23–44 are excised as a propeptide; that stretch reads DDSRDLKRFSRRKMRDGMLNTK. 3 disulfide bridges follow: cysteine 50/cysteine 65, cysteine 57/cysteine 68, and cysteine 64/cysteine 73.

It belongs to the conotoxin O1 superfamily. Expressed by the venom duct.

The protein resides in the secreted. The sequence is that of Conotoxin ArMKLT2-0122 from Conus arenatus (Sand-dusted cone).